Here is a 1255-residue protein sequence, read N- to C-terminus: MANSERTNGLQETNQRYGPLQEQVPKVGNQAVGPIEIFRFADNLDIVLMTLGILASMINGATVPLMSLVLGEISDHLINGCLVQTNRTKYQNCSQTQEKLNEDIIVLTLYYIGIGAAALIFGYVQISFWVITAARQTTRIRKQFFHSILAQDISWFDGSDICELNTRMTGDINKLCDGIGDKIPLMFQNISGFSIGLVISLIKSWKLSLVVLSTSPLIMASSALCSRMIISLTSKELDAYSKAGAVAEEALSSIQTVTAFGAQEKEIQRYTQHLKDAKDAGIKRATASKLSLGAVYFFMNGAYGLAFWYGTSLIFGGEPGYTIGTILAVFFSVIHSSYCIGSVAPHLETFTVARGAAFNIFQVIDKKPNIDNFSTAGFVPECIEGNIEFKNVSFSYPSRPSAKVLKGLNLKIKAGETVALVGPSGSGKSTTVQLLQRLYDPEDGCITVDENDIRAQNVRHYREQIGVVRQEPVLFGTTIGNNIKFGREGVGEKEMEQAAREANAYDFIMAFPKKFNTLVGEKGAQMSGGQKQRIAIARALVRNPKILILDEATSALDTESESLVQTALEKASKGRTTIVVAHRLSTIRGADLIVTMKDGMVVEKGTHAELMAKQGLYYSLAMAQDIKKVDEQMESRTCSTAGNASYGSLCDVNSAKAPCTDQLEEAVHHQKTSLPEVSLLKIFKLSKSEWPFVVLGTLASALNGSVHPVFSIIFGKLVTMFEDKNKATLKQDAELYSMMLVVLGIVALVTYLMQGLFYGRAEENLAMRLRHSAFKAMLYQDMAWYDDKENNTGALTTTLAVDVAQIQGAATSRLGIVTQDVSNMSLSILISFIYGWEMTLLILSFAPVLAVTGMIQTAAMAGFANRDKQALKRAGKIATEAVENIRTVVSLTRERAFEQMYEETLQTQHRNALKRAHITGCCYAVSHAFVHFAHAAGFRFGAYLIQAGRMMPEGMFIVFTAIAYGAMAIGETLVWAPEYSKAKAGASHLFALLKNKPTINSCSQSGEKPDTCEGNLEFREVSFVYPCRPEVPVLQNMSLSIEKGKTVAFVGSSGCGKSTCVQLLQRFYDPMKGQVLLDGVDVKELNVQWLRSQTAIVSQEPVLFNCSIAENIAYGDNSRMVPLEEIKEVADAANIHSFIEGLPRKYNTLVGLRGVQLSGGQKQRLAIARALLRKPKILLLDEATSALDNESEKVVQQALDKARRGKTCLVVAHRLSTIQNADMIVVLQNGSIKEQGTHQELLRNGDTYFKLVAAH.

A helical membrane pass occupies residues 46 to 66; the sequence is IVLMTLGILASMINGATVPLM. Positions 51 to 351 constitute an ABC transmembrane type-1 1 domain; that stretch reads LGILASMING…SVAPHLETFT (301 aa). 2 N-linked (GlcNAc...) asparagine glycosylation sites follow: Asn-86 and Asn-92. The helical transmembrane segment at 104–124 threads the bilayer; the sequence is IIVLTLYYIGIGAAALIFGYV. Residue Asn-189 is glycosylated (N-linked (GlcNAc...) asparagine). 2 helical membrane passes run 290-310 and 314-334; these read LSLGAVYFFMNGAYGLAFWYG and IFGGEPGYTIGTILAVFFSVI. Asn-372 and Asn-391 each carry an N-linked (GlcNAc...) asparagine glycan. Residues 387 to 623 form the ABC transporter 1 domain; it reads IEFKNVSFSY…QGLYYSLAMA (237 aa). 422 to 429 contacts ATP; that stretch reads GPSGSGKS. Residue Asn-643 is glycosylated (N-linked (GlcNAc...) asparagine). 2 consecutive transmembrane segments (helical) span residues 694 to 714 and 738 to 758; these read VLGTLASALNGSVHPVFSIIF and MMLVVLGIVALVTYLMQGLFY. An ABC transmembrane type-1 2 domain is found at 694-981; the sequence is VLGTLASALN…TLVWAPEYSK (288 aa). Residue Asn-790 is glycosylated (N-linked (GlcNAc...) asparagine). The next 3 helical transmembrane spans lie at 814-836, 841-863, and 955-975; these read LGIVTQDVSNMSLSILISFIYGW, LILSFAPVLAVTGMIQTAAMAGF, and MFIVFTAIAYGAMAIGETLVW. An ABC transporter 2 domain is found at 1016 to 1254; it reads LEFREVSFVY…GDTYFKLVAA (239 aa). N-linked (GlcNAc...) asparagine glycosylation is present at Asn-1036. 1051–1058 lines the ATP pocket; the sequence is GSSGCGKS. Residues Asn-1105, Asn-1189, and Asn-1229 are each glycosylated (N-linked (GlcNAc...) asparagine).

The protein belongs to the ABC transporter superfamily. ABCB family. Multidrug resistance exporter (TC 3.A.1.201) subfamily. In terms of tissue distribution, in developing eye, expressed in basal limbal epithelium but not in central cornea. Acts as a marker of limbal stem cells.

The protein resides in the cell membrane. It catalyses the reaction daunorubicin(in) + ATP + H2O = daunorubicin(out) + ADP + phosphate + H(+). Its function is as follows. Energy-dependent efflux transporter responsible for decreased drug accumulation in multidrug-resistant cells. Specifically present in limbal stem cells, where it plays a key role in corneal development and repair. This Mus musculus (Mouse) protein is ATP-binding cassette sub-family B member 5.